The chain runs to 239 residues: MIENQSDNIDNKEKDVSNQDNAPEDISSEQNSTNENDELTSQKKEAINTEELKNTISNNDARLKQLEKEHETLKNQYVRISADFDNFRKRQSRDQDDLKIQIVSKTLTAILPIVDNFERARQQLQPESEEAQALHRSYQGLYKQLVEVLKQQGVSPMRVVGQQFDPNLHEAVLREPSEESDEDFIIEELQRGYHLEGKVLRHALVKVSMGPGKQNSQQEVEKDTVEEDVNSEVNTSEDV.

Disordered stretches follow at residues 1–56 (MIEN…KNTI) and 208–239 (SMGPGKQNSQQEVEKDTVEEDVNSEVNTSEDV). The segment covering 40–53 (TSQKKEAINTEELK) has biased composition (basic and acidic residues). The span at 224-239 (TVEEDVNSEVNTSEDV) shows a compositional bias: acidic residues.

This sequence belongs to the GrpE family. In terms of assembly, homodimer.

It localises to the cytoplasm. Participates actively in the response to hyperosmotic and heat shock by preventing the aggregation of stress-denatured proteins, in association with DnaK and GrpE. It is the nucleotide exchange factor for DnaK and may function as a thermosensor. Unfolded proteins bind initially to DnaJ; upon interaction with the DnaJ-bound protein, DnaK hydrolyzes its bound ATP, resulting in the formation of a stable complex. GrpE releases ADP from DnaK; ATP binding to DnaK triggers the release of the substrate protein, thus completing the reaction cycle. Several rounds of ATP-dependent interactions between DnaJ, DnaK and GrpE are required for fully efficient folding. This chain is Protein GrpE, found in Prochlorococcus marinus (strain MIT 9215).